A 297-amino-acid chain; its full sequence is Putative lipid kinase MamU (297 aa).

Positions 43–131 (EGKDMGRMVR…MDVGRVNDRY (89 aa)) constitute a DAGKc domain. 68–74 (GDGSLSR) provides a ligand contact to ATP. Glu274 acts as the Proton acceptor in catalysis.

It belongs to the diacylglycerol/lipid kinase family.

It is found in the cytoplasm. Its function is as follows. Might phosphorylate lipids. The polypeptide is Putative lipid kinase MamU (Magnetospirillum gryphiswaldense (strain DSM 6361 / JCM 21280 / NBRC 15271 / MSR-1)).